A 149-amino-acid chain; its full sequence is Protein-export protein SecB 2 (149 aa).

The protein belongs to the SecB family. Homotetramer, a dimer of dimers. One homotetramer interacts with 1 SecA dimer.

The protein resides in the cytoplasm. Its function is as follows. One of the proteins required for the normal export of preproteins out of the cell cytoplasm. It is a molecular chaperone that binds to a subset of precursor proteins, maintaining them in a translocation-competent state. It also specifically binds to its receptor SecA. This is Protein-export protein SecB 2 from Francisella tularensis subsp. tularensis (strain FSC 198).